Here is a 351-residue protein sequence, read N- to C-terminus: Dual-specificity RNA methyltransferase RlmN (351 aa).

E90 (proton acceptor) is an active-site residue. One can recognise a Radical SAM core domain in the interval 96–330 (EKDHYTACLS…ATLRKSKGSD (235 aa)). Cysteines 103 and 335 form a disulfide. Positions 110, 114, and 117 each coordinate [4Fe-4S] cluster. Residues 162–163 (GE), S194, 216–218 (SLH), and N292 contribute to the S-adenosyl-L-methionine site. The active-site S-methylcysteine intermediate is C335.

This sequence belongs to the radical SAM superfamily. RlmN family. [4Fe-4S] cluster serves as cofactor.

The protein localises to the cytoplasm. The catalysed reaction is adenosine(2503) in 23S rRNA + 2 reduced [2Fe-2S]-[ferredoxin] + 2 S-adenosyl-L-methionine = 2-methyladenosine(2503) in 23S rRNA + 5'-deoxyadenosine + L-methionine + 2 oxidized [2Fe-2S]-[ferredoxin] + S-adenosyl-L-homocysteine. The enzyme catalyses adenosine(37) in tRNA + 2 reduced [2Fe-2S]-[ferredoxin] + 2 S-adenosyl-L-methionine = 2-methyladenosine(37) in tRNA + 5'-deoxyadenosine + L-methionine + 2 oxidized [2Fe-2S]-[ferredoxin] + S-adenosyl-L-homocysteine. Functionally, specifically methylates position 2 of adenine 2503 in 23S rRNA and position 2 of adenine 37 in tRNAs. m2A2503 modification seems to play a crucial role in the proofreading step occurring at the peptidyl transferase center and thus would serve to optimize ribosomal fidelity. This chain is Dual-specificity RNA methyltransferase RlmN, found in Solidesulfovibrio magneticus (strain ATCC 700980 / DSM 13731 / RS-1) (Desulfovibrio magneticus).